We begin with the raw amino-acid sequence, 356 residues long: Protein-arginine kinase (356 aa).

The region spanning 24–256 (IIISSRVRVA…RQILAQEQAA (233 aa)) is the Phosphagen kinase C-terminal domain. Residues 27–31 (SSRVR), His93, Arg127, 178–182 (RASVM), and 209–214 (RGLYGE) each bind ATP. The RDXXRA motif of the pArg binding pocket involved in allosteric regulation signature appears at 339–344 (RDIFRA).

This sequence belongs to the ATP:guanido phosphotransferase family.

The enzyme catalyses L-arginyl-[protein] + ATP = N(omega)-phospho-L-arginyl-[protein] + ADP + H(+). With respect to regulation, appears to be allosterically activated by the binding of pArg-containing polypeptides to the pArg-binding pocket localized in the C-terminal domain of McsB. Its function is as follows. Catalyzes the specific phosphorylation of arginine residues in proteins. The polypeptide is Protein-arginine kinase (Pelotomaculum thermopropionicum (strain DSM 13744 / JCM 10971 / SI)).